The primary structure comprises 298 residues: Nucleotide-binding protein GK3066 (298 aa).

17–24 (GMSGAGKT) contacts ATP. 68 to 71 (DLRS) is a GTP binding site.

The protein belongs to the RapZ-like family.

Displays ATPase and GTPase activities. The polypeptide is Nucleotide-binding protein GK3066 (Geobacillus kaustophilus (strain HTA426)).